The sequence spans 500 residues: MATIWFLPLLFLSCLLLAALRLKKRRQHQRKPPSPPGFPIIGNLHQLGELPHQSLWSLSKKYGPVMLLKFGSIPTVVVSSSETAKQALKIHDLNCCSRPSLAGPRALSYNYLDIVFSPFNDYWKELRRMCVQELFSPKQVHLIQPIREEEVKKLMNSFSESAAQKTPVNLSEKLASLTVGVICKAAFGVSFQGTVLNSDNFDKLIHDAFLFLGSFSASDYFPNVGWIIDWLTGLQGQRERSVRGLDAFYEQMFDLHKQGNKEGVEDFVDLLLKLEKEETVLGYGKLTRNHIKAVLMNVLLGGIGTSAITMTWAMTELMRNPRVMKKVQSEIRNQIGGKSMICLDDIDQLHYLKMVINETWRLHPPAPLLVPREVMSEFEINGYTIPAKTRLYVNVWGIGRDPDTWKDPEEFLPERFVNSNIDAKGQNFELLPFGSGRRMCPAMYMGTTMVEFGLANLLYHFDWKLPEGMVVEDIDMEESPGLNASKKNELVLVPRKYLNL.

Residues 2-22 (ATIWFLPLLFLSCLLLAALRL) traverse the membrane as a helical segment. Cysteine 440 provides a ligand contact to heme.

This sequence belongs to the cytochrome P450 family. Requires heme as cofactor.

It localises to the membrane. This Arabidopsis thaliana (Mouse-ear cress) protein is Cytochrome P450 71B37 (CYP71B37).